A 422-amino-acid polypeptide reads, in one-letter code: Protein TEX1 (422 aa).

5 WD repeats span residues 61–100 (ITPNEILSLKFHVSGSSMAYSRMDGSLTVWFIKDASFDKS), 158–197 (GSKTKVNTCLYDPLGNWLLAATKSEKIYLFDVKKDHSSVC), 207–246 (EDNDVVYSLAWSNGGSHIFIGFKSGYLAILKAKHGILEVC), 251–290 (AHTGPITEIKMDPWGRNFITGSIDGNCYVWNMKSLCCELI), and 293–332 (DLNSAVTTLDVCHLGKILGICTEDEMVYFYDLNSGNLLHS). The segment at 388–422 (KRRKNNGGGNNHNKRTSKNTDRIGKDRPSRFNSKK) is disordered. Residues 405-416 (KNTDRIGKDRPS) show a composition bias toward basic and acidic residues.

This sequence belongs to the THOC3 family. Component of the transcription/export (TREX) complex and the THO complex.

The protein resides in the nucleus. Component of the TREX complex, which operates in coupling transcription elongation to mRNA export. The sequence is that of Protein TEX1 (TEX1) from Saccharomyces cerevisiae (strain ATCC 204508 / S288c) (Baker's yeast).